Consider the following 364-residue polypeptide: Melatonin receptor type 1B (364 aa).

Over 1-42 (MPENSSIPNCCEASGLAARPSWSGSAGARPPVTARAPWVAPM) the chain is Extracellular. Asn4 carries N-linked (GlcNAc...) asparagine glycosylation. A helical transmembrane segment spans residues 43–63 (LSTVVVVTTAVDFVGNLLVIL). The Cytoplasmic segment spans residues 64-76 (SVLRNRKLRNAGN). The helical transmembrane segment at 77–97 (LFVVSLALADLVIALYPYPLI) threads the bilayer. At 98-115 (LVAIIRDGWVLGEAHCKA) the chain is on the extracellular side. Cys113 and Cys190 are joined by a disulfide. A helical membrane pass occupies residues 116-136 (SAFVMGLSVIGSVFNITAIAI). Over 137 to 155 (NRYCCICHSTTYHRVCSHW) the chain is Cytoplasmic. The chain crosses the membrane as a helical span at residues 156-176 (YTPIYISLVWLLTLVALVPNF). Over 177–200 (FVGSLEYDPRIYSCTFIQTASTQY) the chain is Extracellular. Residues 201-221 (TAAVVAIHFLLPMAVVSFCYL) form a helical membrane-spanning segment. The Cytoplasmic portion of the chain corresponds to 222-253 (RIWVLVLQARRKAKATRKLRLRPSDLRSFLTM). A helical membrane pass occupies residues 254–274 (FAVFVVFAICWAPLNCIGLAV). The Extracellular segment spans residues 275 to 287 (AINPEAMALQVPE). A helical transmembrane segment spans residues 288–308 (GLFVTSYFLAYFNSCLNAIVY). The Cytoplasmic portion of the chain corresponds to 309-364 (GLLNQNFRREYKRILLAIWNTRRCIQHASKHCLTEERQGPTPPAARATVPVKEGAL). The interval 343-364 (EERQGPTPPAARATVPVKEGAL) is disordered. Low complexity predominate over residues 352-364 (AARATVPVKEGAL).

The protein belongs to the G-protein coupled receptor 1 family.

The protein localises to the cell membrane. Functionally, high affinity receptor for melatonin. The activity of this receptor is mediated by pertussis toxin sensitive G proteins that inhibits adenylate cyclase activity. The chain is Melatonin receptor type 1B (Mtnr1b) from Mus musculus (Mouse).